A 355-amino-acid polypeptide reads, in one-letter code: Glutamine synthetase root isozyme 4 (355 aa).

A GS beta-grasp domain is found at 19–99 (IIAEYIWIGG…VMCDCYTPAG (81 aa)). A disordered region spans residues 37–66 (ARTLPGPVTDPSKLPKWNYDGSSTGQAPGE). In terms of domain architecture, GS catalytic spans 106 to 355 (KRYSAAKIFS…IAETTIVWKP (250 aa)).

This sequence belongs to the glutamine synthetase family. Homooctamer. Found in all the tissues examined with higher expression found in tissues of the root, stem and seedling shoot.

The protein localises to the cytoplasm. It catalyses the reaction L-glutamate + NH4(+) + ATP = L-glutamine + ADP + phosphate + H(+). Functionally, plays a role in the flow of nitrogen into nitrogenous organic compounds. The protein is Glutamine synthetase root isozyme 4 (GLN5) of Zea mays (Maize).